Consider the following 669-residue polypeptide: Pre-mRNA-processing factor 39 (669 aa).

Residues 1–10 (MQNSHMDEYR) are compositionally biased toward basic and acidic residues. A disordered region spans residues 1–23 (MQNSHMDEYRNSSNGSTGNSSEV). A compositionally biased stretch (low complexity) spans 11–23 (NSSNGSTGNSSEV). Position 44 is a phosphoserine (serine 44). HAT repeat units lie at residues 109-141 (NHLM…LEKR), 143-175 (DNIK…FLKE), 183-218 (ETNN…WENE), 220-253 (GNLR…HVQN), 333-365 (TFEE…FEIE), 367-399 (GTHE…YMEN), and 404-436 (GVRH…QQGN). Positions 599-624 (KEQDSLKRKAENGSEEPEEKKAHTED) are enriched in basic and acidic residues. Residues 599–634 (KEQDSLKRKAENGSEEPEEKKAHTEDTTSSSTQMID) are disordered. A compositionally biased stretch (polar residues) spans 625-634 (TTSSSTQMID).

The protein belongs to the PRP39 family.

It is found in the nucleus. Involved in pre-mRNA splicing. The sequence is that of Pre-mRNA-processing factor 39 (PRPF39) from Homo sapiens (Human).